We begin with the raw amino-acid sequence, 522 residues long: MASGGGGCSASERLPPPFPGLEPESEGAAGGSEPEAGDSDTEGEDIFTGAAVVSKHQSPKRTTSLLPINNGSKENGIHEEQDQEPQDLFADATVELSLDNTQNNQKKVPAKTLISLPPQEAPNSSKHQPTYEELEEEEQEDQFDLTVGITDPEKIGDGMNAYVAYKVTTQTSLPLFRSKQFAVKRRFSDFLGLYEKLSEKHSQNGFIVPPPPEKSLIGMTKVKVGKEDSSSAEFLEKRRAALERYLQRIVNHPTMLQDPDVREFLEKEELPRAVGTQTLSGAGLLKMFNKATDAVSKMTIKMNESDIWFEEKLQEVECEEQRLRKLHAVVETLVNHRKELALNTAQFAKSLAMLGSSEDNTALSRALSQLAEVEEKIEQLHQEQANNDFFLLAELLSDYIRLLAIVRAAFDQRMKTWQRWQDAQATLQKKREAEARLLWANKPDKLQQAKDEILEWESRVTQYERDFERISTVVRKEVMRFEKEKSKDFKNHVIKYLETLLYSQQQLAKYWEAFLPEAKAIS.

Disordered stretches follow at residues Met-1–Phe-89 and Ser-115–Gln-142. Ser-32 and Ser-39 each carry phosphoserine. Residues Glu-35–Asp-45 are compositionally biased toward acidic residues. Residues Thr-41 and Thr-48 each carry the phosphothreonine modification. Phosphoserine is present on residues Ser-58 and Ser-72. The span at Lys-60 to Lys-73 shows a compositional bias: polar residues. The segment covering Glu-132–Gln-142 has biased composition (acidic residues). Positions Phe-143–Arg-272 constitute a PX domain. Arg-186, Ser-188, and Lys-214 together coordinate a 1,2-diacyl-sn-glycero-3-phospho-(1D-myo-inositol-3-phosphate). Position 188 is a phosphoserine (Ser-188). Lys-237 bears the N6-acetyllysine mark. Arg-238 serves as a coordination point for a 1,2-diacyl-sn-glycero-3-phospho-(1D-myo-inositol-3-phosphate). Ser-280 bears the Phosphoserine mark. The membrane-binding amphipathic helix stretch occupies residues Gly-281 to Met-298. In terms of domain architecture, BAR spans Met-302–Ser-522.

Belongs to the sorting nexin family. Predominantly forms heterodimers with BAR domain-containing sorting nexins SNX5, SNX6 and SNX32; can self-associate to form homodimers. The heterodimers are proposed to self-assemble into helical arrays on the membrane to stabilize and expand local membrane curvature underlying endosomal tubule formation. Thought to be a component of the originally described retromer complex (also called SNX-BAR retromer) which is a pentamer containing the heterotrimeric retromer cargo-selective complex (CSC), also described as vacuolar protein sorting subcomplex (VPS) and a heterodimeric membrane-deforming subcomplex formed between SNX1 or SNX2 and SNX5 or SNX6 (also called SNX-BAR subcomplex); the respective CSC and SNX-BAR subcomplexes associate with low affinity. Interacts with SNX5, SNX6, SNX32, VPS26A, VPS29, VPS35, DRD5, DENND5A, KALRN, RHOG (GDP-bound form). The interaction with SNX2 is reported controversially. Interacts with DNAJC13; prevented by presence of HGS. Interacts with HGS.

It is found in the endosome membrane. The protein localises to the golgi apparatus. The protein resides in the trans-Golgi network membrane. It localises to the early endosome membrane. Its subcellular location is the cell projection. It is found in the lamellipodium. Involved in several stages of intracellular trafficking. Interacts with membranes containing phosphatidylinositol 3-phosphate (PtdIns(3P)) or phosphatidylinositol 3,5-bisphosphate (PtdIns(3,5)P2). Acts in part as component of the retromer membrane-deforming SNX-BAR subcomplex. The SNX-BAR retromer mediates retrograde transport of cargo proteins from endosomes to the trans-Golgi network (TGN) and is involved in endosome-to-plasma membrane transport for cargo protein recycling. The SNX-BAR subcomplex functions to deform the donor membrane into a tubular profile called endosome-to-TGN transport carrier (ETC). Can sense membrane curvature and has in vitro vesicle-to-membrane remodeling activity. Involved in retrograde endosome-to-TGN transport of lysosomal enzyme receptors (IGF2R, M6PR and SORT1). Plays a role in targeting ligand-activated EGFR to the lysosomes for degradation after endocytosis from the cell surface and release from the Golgi. Involvement in retromer-independent endocytic trafficking of P2RY1 and lysosomal degradation of protease-activated receptor-1/F2R. Promotes KALRN- and RHOG-dependent but retromer-independent membrane remodeling such as lamellipodium formation; the function is dependent on GEF activity of KALRN. Required for endocytosis of DRD5 upon agonist stimulation but not for basal receptor trafficking. This Macaca fascicularis (Crab-eating macaque) protein is Sorting nexin-1 (SNX1).